A 1468-amino-acid chain; its full sequence is Potassium channel K2 (1468 aa).

The next 6 helical transmembrane spans lie at 48–68 (MIYI…YWIY), 146–165 (FNCY…WYIS), 185–209 (IYIY…IISY), 221–240 (LLID…RHFF), 246–264 (IDIY…FLNV), and 285–306 (IILG…IQGI). The pore-forming intramembrane region spans 326-344 (YFYFSIISISTVGYGDIIP). The helical transmembrane segment at 351–368 (VICIFFIFWTFIWVPIQF) threads the bilayer. Residues 804–823 (TCARTNESHKNNRLRSRRSQ) are disordered. A compositionally biased stretch (basic residues) spans 814–823 (NNRLRSRRSQ). Residues 1141–1185 (KSNKNSNNNNKCEQIKQLNNNLTFKKNEKKTKSNKQNTNDTLERR) adopt a coiled-coil conformation.

It is found in the membrane. Functionally, may be involved in transmembrane potassium transport at the subcellular level not affecting bulk potassium transport across the plasma membrane. The polypeptide is Potassium channel K2 (Plasmodium berghei (strain Anka)).